Consider the following 215-residue polypeptide: HTH-type transcriptional repressor FabR (215 aa).

An HTH tetR-type domain is found at 10–70; it reads KTRRSLVEAA…TMVDESGLML (61 aa). The segment at residues 33–52 is a DNA-binding region (H-T-H motif); the sequence is SLREVAREAGIAPTSFYRHF.

Homodimer.

The protein resides in the cytoplasm. Functionally, represses the transcription of fabB, involved in unsaturated fatty acid (UFA) biosynthesis. By controlling UFA production, FabR directly influences the physical properties of the membrane bilayer. The sequence is that of HTH-type transcriptional repressor FabR from Escherichia coli O9:H4 (strain HS).